A 280-amino-acid polypeptide reads, in one-letter code: RNA polymerase II holoenzyme cyclin-like subunit (280 aa).

Residues 23–150 form the Cyclin N-terminal domain; the sequence is ERRKGLEDIF…LIEELGTYLV (128 aa).

It belongs to the cyclin family. Cyclin C subfamily. In terms of assembly, component of the SRB8-11 complex, a regulatory module of the Mediator complex.

Its subcellular location is the nucleus. In terms of biological role, component of the SRB8-11 complex. The SRB8-11 complex is a regulatory module of the Mediator complex which is itself involved in regulation of basal and activated RNA polymerase II-dependent transcription. The SRB8-11 complex may be involved in the transcriptional repression of a subset of genes regulated by Mediator. It may inhibit the association of the Mediator complex with RNA polymerase II to form the holoenzyme complex. The SRB8-11 complex phosphorylates the C-terminal domain (CTD) of the largest subunit of RNA polymerase II. The polypeptide is RNA polymerase II holoenzyme cyclin-like subunit (SSN8) (Yarrowia lipolytica (strain CLIB 122 / E 150) (Yeast)).